A 293-amino-acid chain; its full sequence is 4-hydroxy-tetrahydrodipicolinate synthase (293 aa).

Thr-45 contributes to the pyruvate binding site. Catalysis depends on Tyr-133, which acts as the Proton donor/acceptor. Lys-161 (schiff-base intermediate with substrate) is an active-site residue. Ile-203 contacts pyruvate.

Belongs to the DapA family. In terms of assembly, homotetramer; dimer of dimers.

Its subcellular location is the cytoplasm. It carries out the reaction L-aspartate 4-semialdehyde + pyruvate = (2S,4S)-4-hydroxy-2,3,4,5-tetrahydrodipicolinate + H2O + H(+). The protein operates within amino-acid biosynthesis; L-lysine biosynthesis via DAP pathway; (S)-tetrahydrodipicolinate from L-aspartate: step 3/4. Functionally, catalyzes the condensation of (S)-aspartate-beta-semialdehyde [(S)-ASA] and pyruvate to 4-hydroxy-tetrahydrodipicolinate (HTPA). This chain is 4-hydroxy-tetrahydrodipicolinate synthase, found in Aliivibrio fischeri (strain MJ11) (Vibrio fischeri).